The following is a 41-amino-acid chain: Photosystem I reaction center subunit IX (41 aa).

The chain crosses the membrane as a helical span at residues 7-27; it reads YLSTAPVVALIWFTFTAGLLI.

The protein belongs to the PsaJ family.

The protein resides in the plastid. It is found in the chloroplast thylakoid membrane. Functionally, may help in the organization of the PsaE and PsaF subunits. The sequence is that of Photosystem I reaction center subunit IX from Pleurastrum terricola (Filamentous green alga).